Reading from the N-terminus, the 537-residue chain is Zinc metalloproteinase nas-23 (537 aa).

A signal peptide spans Met-1 to Gly-16. Residues Val-17 to Arg-111 constitute a propeptide that is removed on maturation. N-linked (GlcNAc...) asparagine glycosylation is present at Asn-77. The Peptidase M12A domain maps to Asn-116–Glu-311. 6 disulfides stabilise this stretch: Cys-156–Cys-310, Cys-178–Cys-199, Cys-314–Cys-334, Cys-336–Cys-345, Cys-356–Cys-385, and Cys-412–Cys-433. Residue His-207 participates in Zn(2+) binding. The active site involves Glu-208. Positions 211 and 217 each coordinate Zn(2+). The 41-residue stretch at Arg-306–Lys-346 folds into the EGF-like domain. The region spanning Cys-356–Gly-471 is the CUB domain. Asn-481 carries N-linked (GlcNAc...) asparagine glycosylation.

Requires Zn(2+) as cofactor. In terms of tissue distribution, expressed in the hypodermis, rectum and to a lesser extent in pharyngeal muscles and intestine.

Its subcellular location is the secreted. In terms of biological role, metalloprotease. The polypeptide is Zinc metalloproteinase nas-23 (nas-23) (Caenorhabditis elegans).